The primary structure comprises 334 residues: Ferrochelatase 1 (334 aa).

Fe cation contacts are provided by histidine 201 and glutamate 282.

Belongs to the ferrochelatase family.

It localises to the cytoplasm. It carries out the reaction heme b + 2 H(+) = protoporphyrin IX + Fe(2+). It participates in porphyrin-containing compound metabolism; protoheme biosynthesis; protoheme from protoporphyrin-IX: step 1/1. In terms of biological role, catalyzes the ferrous insertion into protoporphyrin IX. The polypeptide is Ferrochelatase 1 (Shewanella oneidensis (strain ATCC 700550 / JCM 31522 / CIP 106686 / LMG 19005 / NCIMB 14063 / MR-1)).